A 1772-amino-acid polypeptide reads, in one-letter code: Merozoite surface protein 1 (1772 aa).

The N-terminal stretch at 1 to 18 (MKVIGLLFSFVFFAIKCK) is a signal peptide. N54 carries an N-linked (GlcNAc...) asparagine glycan. Residues 290–319 (TGGQSSTEPGSGGSSASGTSSSGQASAGTG) are disordered. Low complexity predominate over residues 305-319 (ASGTSSSGQASAGTG). N-linked (GlcNAc...) asparagine glycosylation is found at N406 and N646. A disordered region spans residues 703 to 796 (KERMEQGPAI…QPSQAASSTT (94 aa)). Residues 724-796 (SAESSTDRST…QPSQAASSTT (73 aa)) are compositionally biased toward low complexity. N-linked (GlcNAc...) asparagine glycosylation occurs at N829. The segment at 924 to 1070 (AAPTPVTPAA…SRAESEEDMP (147 aa)) is disordered. Composition is skewed to low complexity over residues 930–946 (TPAA…PDVQ) and 956–1052 (SQQP…NSQS). N-linked (GlcNAc...) asparagine glycans are attached at residues N1018 and N1090. The tract at residues 1362–1383 (GAVPGSGTDTRVAGSSVDDNED) is disordered. Residues N1408, N1446, N1541, and N1629 are each glycosylated (N-linked (GlcNAc...) asparagine). EGF-like domains follow at residues 1661 to 1703 (HVCV…VENN) and 1704 to 1752 (NPTC…FCSS). A disulfide bridge connects residues C1663 and C1675. N1680 carries N-linked (GlcNAc...) asparagine glycosylation. 4 disulfides stabilise this stretch: C1687–C1699, C1707–C1720, C1714–C1734, and C1736–C1750. A lipid anchor (GPI-anchor amidated serine) is attached at S1751. The propeptide at 1752–1772 (SSSFMGLSILLIITLIVFNIF) is removed in mature form.

In terms of assembly, forms a complex composed of subunits p83, p30, p38, and p42 which remain non-covalently associated; the complex is formed at the merozoite surface prior to egress from host erythrocytes. In terms of processing, the p230 precursor is cleaved by SUB1 prior to merozoite egress into 4 subunits p83, p30, p38, and p42 which remain non-covalently associated. In a second processing step during erythrocyte invasion, p42 is cleaved by SUB2 into p33 and p19; the latter remains attached to the merozoite surface via its GPI-anchor and stays on the surface during the subsequent ring stage.

The protein localises to the cell membrane. It is found in the secreted. In terms of biological role, during the asexual blood stage, involved in merozoite egress from host erythrocytes possibly via its interaction with the host cytoskeleton protein spectrin resulting in the destabilization of the host cytoskeleton and thus leading to erythrocyte cell membrane rupture. Involved in the binding to host erythrocytes and is required for host erythrocyte invasion. The polypeptide is Merozoite surface protein 1 (Plasmodium yoelii yoelii).